Consider the following 512-residue polypeptide: Spermatocyte protein spe-8 (512 aa).

Positions 1–85 are disordered; that stretch reads MRSKSSEGDL…PKPSSDNNNS (85 aa). The segment covering 15-41 has biased composition (basic and acidic residues); sequence TQSREDKETTATYSEDTKPETQKERNA. Pro residues predominate over residues 68–78; it reads EAPPPPPPPKP. In terms of domain architecture, SH2 spans 114-205; sequence FYHGFMGRNE…YEGMTLICGL (92 aa). One can recognise a Protein kinase domain in the interval 217–485; the sequence is VTLNKKLGEG…KEEVGFHEIE (269 aa). ATP contacts are provided by residues 223–231 and K250; that span reads LGEGQFGEV. D344 acts as the Proton acceptor in catalysis.

This sequence belongs to the protein kinase superfamily. Tyr protein kinase family. Fes/fps subfamily. Expression is restricted to male germline.

It is found in the cell membrane. Its subcellular location is the cytoplasm. It carries out the reaction L-tyrosyl-[protein] + ATP = O-phospho-L-tyrosyl-[protein] + ADP + H(+). Its function is as follows. Probable non-receptor tyrosine-protein kinase which plays a role in spermatid activation (spermiogenesis) in hermaphrodites. The chain is Spermatocyte protein spe-8 from Caenorhabditis elegans.